Consider the following 437-residue polypeptide: Probable peptidoglycan-N-acetylglucosamine deacetylase ARB_03699 (437 aa).

The signal sequence occupies residues 1–20 (MLMRLYTFFAAALLACCAAA). Residues 47–132 (STRAATTTTT…STSAAAPSTP (86 aa)) are disordered. An N-linked (GlcNAc...) asparagine glycan is attached at Asn99. The 186-residue stretch at 149–334 (GTVAITFDDG…EVKRRGLKAV (186 aa)) folds into the NodB homology domain. Asp156 serves as the catalytic Proton acceptor. Asp157, His209, and His213 together coordinate Zn(2+). Residue Tyr251 coordinates substrate. Residue His308 is the Proton donor of the active site. The segment covering 350 to 370 (TTPVQVPTGTSTTSPTATPTS) has biased composition (low complexity). Residues 350–384 (TTPVQVPTGTSTTSPTATPTSPGTPPPAPTQPGVA) form a disordered region. One can recognise a LysM domain in the interval 389–435 (KWHTVVSGDTCYDIAAANGISLDNLYKWNPAVGTSCASLWLGYAVCV).

Zn(2+) serves as cofactor. Requires Co(2+) as cofactor.

It localises to the secreted. The enzyme catalyses peptidoglycan-N-acetyl-D-glucosamine + H2O = peptidoglycan-D-glucosamine + acetate.. In terms of biological role, catalyzes the deacetylation of N-acetylglucosamine (GlcNAc) residues in peptidoglycan. This Arthroderma benhamiae (strain ATCC MYA-4681 / CBS 112371) (Trichophyton mentagrophytes) protein is Probable peptidoglycan-N-acetylglucosamine deacetylase ARB_03699.